The chain runs to 283 residues: Polyamine aminopropyltransferase (283 aa).

In terms of domain architecture, PABS spans glutamate 2–lysine 237. Glutamine 31 is an S-methyl-5'-thioadenosine binding site. Residues histidine 62 and aspartate 86 each coordinate spermidine. Residues glutamate 106 and glutamate 137 to glycine 138 contribute to the S-methyl-5'-thioadenosine site. The Proton acceptor role is filled by aspartate 155. Spermidine is bound at residue aspartate 155–aspartate 158. Residue proline 162 coordinates S-methyl-5'-thioadenosine.

Belongs to the spermidine/spermine synthase family. As to quaternary structure, homodimer or homotetramer.

It is found in the cytoplasm. It carries out the reaction S-adenosyl 3-(methylsulfanyl)propylamine + putrescine = S-methyl-5'-thioadenosine + spermidine + H(+). The protein operates within amine and polyamine biosynthesis; spermidine biosynthesis; spermidine from putrescine: step 1/1. Functionally, catalyzes the irreversible transfer of a propylamine group from the amino donor S-adenosylmethioninamine (decarboxy-AdoMet) to putrescine (1,4-diaminobutane) to yield spermidine. The chain is Polyamine aminopropyltransferase from Lachnoclostridium phytofermentans (strain ATCC 700394 / DSM 18823 / ISDg) (Clostridium phytofermentans).